The primary structure comprises 389 residues: MQKKIMLLGSGELGKEFVIAVKRLGHFVIAVDSYNDAPAQQVADRREVINMLDGAALDAIVARHQPDVIVPEIEAIRTERFYDYEKEGIQVVPSARAANFTMNRKAIRDLASKELGLRTATYRYAASKEELKRAIGEVGVPCVVKPLMSSSGKGQSTVKTEADIEHAWSYSQSGRRGDSVEVIVEAFVPFHTEITLLTVTQKNGPTLFCPPIGHRQERGDYQESWQPCRIGDAQLHEAQEIAEKVTRSLTGAGIWGVEFFLADDGLYFSELSPRPHDTGMVTLAGTQNFTEFELHARAVLGLPIPKIELLRVGASAVVSADREGKNPDYSGLEEALGEPCTDIRIFGKPATRPYRRMGVTLAYDEPGSDVDTVKAKAIANARKVRVTSE.

Residues 12 to 13 (EL) and Glu-72 contribute to the N(1)-(5-phospho-beta-D-ribosyl)glycinamide site. ATP contacts are provided by residues Arg-104, Lys-145, 150 to 155 (SSGKGQ), 185 to 188 (EAFV), and Glu-193. The ATP-grasp domain maps to 109-300 (DLASKELGLR…EFELHARAVL (192 aa)). Residues Glu-258 and Glu-270 each coordinate Mg(2+). N(1)-(5-phospho-beta-D-ribosyl)glycinamide-binding positions include Asp-277, Lys-348, and 355-356 (RR).

It belongs to the PurK/PurT family. Homodimer.

It catalyses the reaction N(1)-(5-phospho-beta-D-ribosyl)glycinamide + formate + ATP = N(2)-formyl-N(1)-(5-phospho-beta-D-ribosyl)glycinamide + ADP + phosphate + H(+). The protein operates within purine metabolism; IMP biosynthesis via de novo pathway; N(2)-formyl-N(1)-(5-phospho-D-ribosyl)glycinamide from N(1)-(5-phospho-D-ribosyl)glycinamide (formate route): step 1/1. Its function is as follows. Involved in the de novo purine biosynthesis. Catalyzes the transfer of formate to 5-phospho-ribosyl-glycinamide (GAR), producing 5-phospho-ribosyl-N-formylglycinamide (FGAR). Formate is provided by PurU via hydrolysis of 10-formyl-tetrahydrofolate. The protein is Formate-dependent phosphoribosylglycinamide formyltransferase of Chlorobium phaeobacteroides (strain DSM 266 / SMG 266 / 2430).